A 683-amino-acid chain; its full sequence is DNA ligase (683 aa).

Residues 36-40, 85-86, and Glu119 each bind NAD(+); these read DAEYD and SL. Lys121 functions as the N6-AMP-lysine intermediate in the catalytic mechanism. NAD(+) contacts are provided by Arg142, Glu179, Lys295, and Lys319. Residues Cys413, Cys416, Cys431, and Cys437 each contribute to the Zn(2+) site. Positions 596 to 683 constitute a BRCT domain; sequence TETLPLSGQT…EHQAHLGGEA (88 aa).

This sequence belongs to the NAD-dependent DNA ligase family. LigA subfamily. Mg(2+) is required as a cofactor. The cofactor is Mn(2+).

The catalysed reaction is NAD(+) + (deoxyribonucleotide)n-3'-hydroxyl + 5'-phospho-(deoxyribonucleotide)m = (deoxyribonucleotide)n+m + AMP + beta-nicotinamide D-nucleotide.. In terms of biological role, DNA ligase that catalyzes the formation of phosphodiester linkages between 5'-phosphoryl and 3'-hydroxyl groups in double-stranded DNA using NAD as a coenzyme and as the energy source for the reaction. It is essential for DNA replication and repair of damaged DNA. In Hahella chejuensis (strain KCTC 2396), this protein is DNA ligase.